A 146-amino-acid chain; its full sequence is MANKMNLAFSALSENESFARVTVSAFIAQLDPTMEELTEIKTIVSEAVTNAIIHGYENDPNGQVYITAELKDRELELIIRDEGVGISDLDEARQPLYTSKPELERSGMGFTIMENFCQELKVISEPMIGTTVYVKKQLTTTKAMCR.

The protein belongs to the anti-sigma-factor family.

The catalysed reaction is L-seryl-[protein] + ATP = O-phospho-L-seryl-[protein] + ADP + H(+). It catalyses the reaction L-threonyl-[protein] + ATP = O-phospho-L-threonyl-[protein] + ADP + H(+). Functionally, binds to sigma F and blocks its ability to form an RNA polymerase holoenzyme (E-sigma F). Phosphorylates SpoIIAA on a serine residue. This phosphorylation may enable SpoIIAA to act as an anti-anti-sigma factor that counteracts SpoIIAB and thus releases sigma F from inhibition. The chain is Anti-sigma F factor from Shouchella clausii (strain KSM-K16) (Alkalihalobacillus clausii).